The chain runs to 608 residues: Endo-1,4-beta-xylanase C (608 aa).

Positions 1–25 (MKTFSVTKSSVVFAMALGMASTAFA) are cleaved as a signal peptide. A GH11 1 domain is found at 40-250 (TITSNQTGKI…VNGEVRGGHM (211 aa)). The active-site Nucleophile is the E142. Residue E237 is the Proton donor of the active site. Low complexity predominate over residues 263–294 (SDPVSSSSVKSSSSTDAPKSSSSKGNGNVSGK). Positions 263-296 (SDPVSSSSVKSSSSTDAPKSSSSKGNGNVSGKID) are disordered. One can recognise a GH11 2 domain in the interval 316–514 (NSSVTGNVGS…GSGSFDVTYF (199 aa)). E409 (nucleophile) is an active-site residue. E501 acts as the Proton donor in catalysis. A disordered region spans residues 520 to 539 (AHPLAQPEPESSSSEAKVES). The span at 527–539 (EPESSSSEAKVES) shows a compositional bias: low complexity.

It belongs to the glycosyl hydrolase 11 (cellulase G) family.

It carries out the reaction Endohydrolysis of (1-&gt;4)-beta-D-xylosidic linkages in xylans.. Its pathway is glycan degradation; xylan degradation. Its function is as follows. Cleaves xylans with the production of xylose, xylobiose and xylo-oligosaccharides. The chain is Endo-1,4-beta-xylanase C (xynC) from Fibrobacter succinogenes (strain ATCC 19169 / S85).